A 154-amino-acid polypeptide reads, in one-letter code: 3-hydroxyacyl-[acyl-carrier-protein] dehydratase FabZ (154 aa).

The active site involves H54.

This sequence belongs to the thioester dehydratase family. FabZ subfamily.

The protein resides in the cytoplasm. The enzyme catalyses a (3R)-hydroxyacyl-[ACP] = a (2E)-enoyl-[ACP] + H2O. Involved in unsaturated fatty acids biosynthesis. Catalyzes the dehydration of short chain beta-hydroxyacyl-ACPs and long chain saturated and unsaturated beta-hydroxyacyl-ACPs. The polypeptide is 3-hydroxyacyl-[acyl-carrier-protein] dehydratase FabZ (Chlamydia abortus (strain DSM 27085 / S26/3) (Chlamydophila abortus)).